The primary structure comprises 396 residues: Deoxyguanosinetriphosphate triphosphohydrolase-like protein (396 aa).

In terms of domain architecture, HD spans 62–198 (RLTHSLEVAQ…AALADDIAYN (137 aa)).

The protein belongs to the dGTPase family. Type 2 subfamily.

In Jannaschia sp. (strain CCS1), this protein is Deoxyguanosinetriphosphate triphosphohydrolase-like protein.